We begin with the raw amino-acid sequence, 364 residues long: Delta(7)-sterol 5(6)-desaturase (364 aa).

Transmembrane regions (helical) follow at residues 94 to 114 (FFSLWAVVTVFGLLLYLITAS), 142 to 162 (LAVSAIPTMSLLTVPWFMLEL), and 181 to 201 (KLLIEYATFIFFTDCGIYLAH). A Fatty acid hydroxylase domain is found at 188 to 312 (TFIFFTDCGI…FTTLWDRLGG (125 aa)). Residues 201–205 (HRWLH) carry the Histidine box-1 motif. The short motif at 214 to 218 (HKPHH) is the Histidine box-2 element. The chain crosses the membrane as a helical span at residues 249–269 (ILPLHKISYLILFTFVNFWSV). Residues 289 to 293 (HTVHH) carry the Histidine box-3 motif.

This sequence belongs to the sterol desaturase family. The cofactor is Fe cation.

It is found in the endoplasmic reticulum membrane. The enzyme catalyses a Delta(7)-sterol + 2 Fe(II)-[cytochrome b5] + O2 + 2 H(+) = a Delta(5),Delta(7)-sterol + 2 Fe(III)-[cytochrome b5] + 2 H2O. The protein operates within steroid metabolism; ergosterol biosynthesis; ergosterol from zymosterol: step 3/5. In terms of biological role, catalyzes the introduction of a C-5 double bond in the B ring of ergosterol. May contribute to the regulation of ergosterol biosynthesis. The chain is Delta(7)-sterol 5(6)-desaturase (ERG3) from Candida glabrata (strain ATCC 2001 / BCRC 20586 / JCM 3761 / NBRC 0622 / NRRL Y-65 / CBS 138) (Yeast).